Here is a 490-residue protein sequence, read N- to C-terminus: Protein twist (490 aa).

Disordered stretches follow at residues 48–72, 96–165, and 244–264; these read QLQH…QHAQ, PSNE…TGGS, and QQQQ…HAQM. The segment covering 54–68 has biased composition (basic residues); that stretch reads QHLHSHQHHQQHHQQ. 2 stretches are compositionally biased toward low complexity: residues 102-134 and 244-263; these read STSS…NPSG and QQQQ…SHAQ. Phosphoserine occurs at positions 325 and 328. A disordered region spans residues 330–361; the sequence is LDGSDAGGKAFRKPRRRLKRKPSKTEETDEFS. The span at 339-351 shows a compositional bias: basic residues; the sequence is AFRKPRRRLKRKP. Residues 362–413 enclose the bHLH domain; that stretch reads NQRVMANVRERQRTQSLNDAFKSLQQIIPTLPSDKLSKIQTLKLATRYIDFL.

In terms of assembly, efficient DNA binding requires dimerization with another bHLH protein. Homodimer. Interacts with akirin. As to expression, expressed in embryonic abdomen; a single cell ventrally, pairs of cells laterally and three cells dorsally in each hemisegment. In the thorax, there are patches of cells associated with the imaginal disks. During larval development, cells proliferate and, in the abdomen, they form ventral, lateral and dorsal clusters, which are the precursors of the adult abdominal muscles. In the thorax, they form populations of cells in the imaginal disks that correspond to the adepithelial cells.

Its subcellular location is the nucleus. Functionally, involved in the establishment and dorsoventral patterning of germ layers in the embryo. This is Protein twist (twi) from Drosophila melanogaster (Fruit fly).